Consider the following 200-residue polypeptide: 3-isopropylmalate dehydratase small subunit (200 aa).

This sequence belongs to the LeuD family. LeuD type 1 subfamily. As to quaternary structure, heterodimer of LeuC and LeuD.

The catalysed reaction is (2R,3S)-3-isopropylmalate = (2S)-2-isopropylmalate. It functions in the pathway amino-acid biosynthesis; L-leucine biosynthesis; L-leucine from 3-methyl-2-oxobutanoate: step 2/4. Functionally, catalyzes the isomerization between 2-isopropylmalate and 3-isopropylmalate, via the formation of 2-isopropylmaleate. This chain is 3-isopropylmalate dehydratase small subunit, found in Vibrio campbellii (strain ATCC BAA-1116).